The chain runs to 599 residues: Elongation factor 4 (599 aa).

The 183-residue stretch at 5–187 (STIRNFAIIA…AIVHRLPAPV (183 aa)) folds into the tr-type G domain. GTP contacts are provided by residues 17–22 (DHGKST) and 134–137 (NKAD).

The protein belongs to the TRAFAC class translation factor GTPase superfamily. Classic translation factor GTPase family. LepA subfamily.

It localises to the cell inner membrane. It catalyses the reaction GTP + H2O = GDP + phosphate + H(+). Required for accurate and efficient protein synthesis under certain stress conditions. May act as a fidelity factor of the translation reaction, by catalyzing a one-codon backward translocation of tRNAs on improperly translocated ribosomes. Back-translocation proceeds from a post-translocation (POST) complex to a pre-translocation (PRE) complex, thus giving elongation factor G a second chance to translocate the tRNAs correctly. Binds to ribosomes in a GTP-dependent manner. The protein is Elongation factor 4 of Anaplasma marginale (strain Florida).